A 213-amino-acid polypeptide reads, in one-letter code: MATEVAAAVPPPQLDAEENSGLEAAAAEAKIQPSSGPHKLERKWTFWFDNQSKPKQGAAWGSSLRKAYTFETVQEFWCLYDQVFKPSKFPPNADFHLFRAGVEPKWEDPECANGGKWTVTSRSKASLDTMWLETLMALIGEQFDEADEICGVVASVRQRQDKLALWTRNAANEAAQMGIGRKWKEIIDVTDKITYSFHDDSKRERSAKPRYNV.

Residues 1–37 form a disordered region; sequence MATEVAAAVPPPQLDAEENSGLEAAAAEAKIQPSSGP. Residues 56-61, lysine 88, and 106-107 contribute to the mRNA site; these read QGAAWG and WE. Cysteine 111 and cysteine 150 are joined by a disulfide. MRNA is bound by residues 157–162 and 202–205; these read RQRQDK and KRER.

Belongs to the eukaryotic initiation factor 4E family. In terms of assembly, EIF4F is a multi-subunit complex, the composition of which varies with external and internal environmental conditions. It is composed of at least EIF4A, EIF4E and EIF4G. EIF4E is also known to interact with other partners. In higher plants two isoforms of EIF4F have been identified, named isoform EIF4F and isoform EIF(iso)4F. Isoform EIF4F has subunits p220 and p26, whereas isoform EIF(iso)4F has subunits p82 and p28. As to quaternary structure, (Microbial infection) Interacts with potyvirus viral genome-linked protein (VPg) of plum pox virus (PPV) strain D both in nucleus and cytoplasm; this interaction is possible in susceptible hosts but is impaired in resistant plants. Post-translationally, according to the redox status, the Cys-111-Cys-150 disulfide bridge may have a role in regulating protein function by affecting its ability to bind capped mRNA. Mostly expressed in leaves, flower buds, leaf buds and anthers, to a lower extent in roots, stems and green immature fruit, and, at low levels, in petals.

Its subcellular location is the cytoplasm. It is found in the nucleus. Component of the protein complex eIF4F, which is involved in the recognition of the mRNA cap, ATP-dependent unwinding of 5'-terminal secondary structure and recruitment of mRNA to the ribosome. Recognizes and binds the 7-methylguanosine-containing mRNA cap during an early step in the initiation of protein synthesis and facilitates ribosome binding by inducing the unwinding of the mRNAs secondary structures. Key component of recessive resistance to potyviruses such as the plum pox virus (PPV) strain D. In terms of biological role, (Microbial infection) Susceptibility host factor required for viral infection by recruiting viral RNAs to the host ribosomal complex via an interaction with viral genome-linked protein (VPg). The protein is Eukaryotic translation initiation factor isoform 4E of Prunus domestica (Garden plum).